The chain runs to 570 residues: Sulfite reductase [NADPH] hemoprotein beta-component (570 aa).

Cysteine 434, cysteine 440, cysteine 479, and cysteine 483 together coordinate [4Fe-4S] cluster. Cysteine 483 is a siroheme binding site.

It belongs to the nitrite and sulfite reductase 4Fe-4S domain family. As to quaternary structure, alpha(8)-beta(8). The alpha component is a flavoprotein, the beta component is a hemoprotein. It depends on siroheme as a cofactor. [4Fe-4S] cluster serves as cofactor.

The enzyme catalyses hydrogen sulfide + 3 NADP(+) + 3 H2O = sulfite + 3 NADPH + 4 H(+). Its pathway is sulfur metabolism; hydrogen sulfide biosynthesis; hydrogen sulfide from sulfite (NADPH route): step 1/1. In terms of biological role, component of the sulfite reductase complex that catalyzes the 6-electron reduction of sulfite to sulfide. This is one of several activities required for the biosynthesis of L-cysteine from sulfate. The sequence is that of Sulfite reductase [NADPH] hemoprotein beta-component from Escherichia coli (strain ATCC 8739 / DSM 1576 / NBRC 3972 / NCIMB 8545 / WDCM 00012 / Crooks).